We begin with the raw amino-acid sequence, 149 residues long: Macrodomain Ter protein (149 aa).

It belongs to the MatP family. In terms of assembly, homodimer.

The protein resides in the cytoplasm. Its function is as follows. Required for spatial organization of the terminus region of the chromosome (Ter macrodomain) during the cell cycle. Prevents early segregation of duplicated Ter macrodomains during cell division. Binds specifically to matS, which is a 13 bp signature motif repeated within the Ter macrodomain. This is Macrodomain Ter protein from Vibrio parahaemolyticus serotype O3:K6 (strain RIMD 2210633).